A 369-amino-acid polypeptide reads, in one-letter code: Beta-1,3-galactosyltransferase 9 (369 aa).

Residues 1-12 lie on the Cytoplasmic side of the membrane; sequence MQVTFCRLRTHQ. A helical; Signal-anchor for type II membrane protein transmembrane segment spans residues 13-33; sequence WCFILFNVILFHALLFGTDFV. The Lumenal portion of the chain corresponds to 34 to 369; that stretch reads EEYFLHSLPY…IKNNLMYFAD (336 aa). 3 N-linked (GlcNAc...) asparagine glycosylation sites follow: N66, N96, and N109.

The protein belongs to the glycosyltransferase 31 family.

It is found in the golgi apparatus membrane. Putative glycosyltransferase that could catalyze the transfer of galactose residues from UDP-alpha-D-galactose. The chain is Beta-1,3-galactosyltransferase 9 from Homo sapiens (Human).